The chain runs to 337 residues: Zinc finger protein 488 (337 aa).

Positions 1–10 are enriched in polar residues; sequence MAAGTSTLLS. 3 disordered regions span residues 1-32, 55-83, and 146-179; these read MAAGTSTLLSLSGPADHMAEGKGAPLRPSVEK, SDTAAGKGSQDEAYTELSLPTAPNKPRLD, and SAWPGAPRSEQKSAFSKPAKRPAEKPKRSPMLLA. Residues 69 to 184 are important for transcriptional repression activity; sequence TELSLPTAPN…PMLLAGGSAE (116 aa). 2 C2H2-type zinc fingers span residues 272-299 and 314-336; these read NWCAKCNLAFRLTADLVFHMRSHHKREH and LTCPVCHEYFRERHHLSRHMASH. A Nuclear localization signal motif is present at residues 295 to 302; that stretch reads HKREHVGP.

This sequence belongs to the krueppel C2H2-type zinc-finger protein family. As to quaternary structure, interacts with OLIG2.

It is found in the nucleus. In terms of biological role, transcriptional repressor. Plays a role in oligodendrocyte differentiation, together with OLIG2. Mediates Notch signaling-activated formation of oligodendrocyte precursors. Promotes differentiation of adult neural stem progenitor cells (NSPCs) into mature oligodendrocytes and contributes to remyelination following nerve injury. The chain is Zinc finger protein 488 (Znf488) from Mus musculus (Mouse).